The primary structure comprises 352 residues: Cell division protein ZipA (352 aa).

At 1-6 (MKDLQL) the chain is on the periplasmic side. Residues 7-27 (VLFVLGAIAIIAVLVHGFWSI) form a helical membrane-spanning segment. At 28–352 (RKQQPKSMKQ…KDYLRRLNAA (325 aa)) the chain is on the cytoplasmic side. 2 disordered regions span residues 78–120 (KPVL…HVEP) and 138–160 (PAPTASTSMNTPKKIFNPSTSTA). Residues 83 to 105 (TNLSQKPHSGTTKLTDTPLQDSL) show a composition bias toward polar residues. Positions 111–120 (HKTEPEHVEP) are enriched in basic and acidic residues. Positions 141 to 160 (TASTSMNTPKKIFNPSTSTA) are enriched in polar residues.

It belongs to the ZipA family. In terms of assembly, interacts with FtsZ via their C-terminal domains.

The protein resides in the cell inner membrane. Functionally, essential cell division protein that stabilizes the FtsZ protofilaments by cross-linking them and that serves as a cytoplasmic membrane anchor for the Z ring. Also required for the recruitment to the septal ring of downstream cell division proteins. The polypeptide is Cell division protein ZipA (Shewanella frigidimarina (strain NCIMB 400)).